The sequence spans 118 residues: D-dopachrome decarboxylase (118 aa).

Pro2 bears the N-acetylproline mark.

This sequence belongs to the MIF family. As to quaternary structure, homotrimer.

The protein resides in the cytoplasm. It carries out the reaction D-dopachrome + H(+) = 5,6-dihydroxyindole + CO2. Tautomerization of D-dopachrome with decarboxylation to give 5,6-dihydroxyindole (DHI). This Gallus gallus (Chicken) protein is D-dopachrome decarboxylase (DDT).